The chain runs to 204 residues: Imidazole glycerol phosphate synthase subunit HisH (204 aa).

A Glutamine amidotransferase type-1 domain is found at M1–I204. The active-site Nucleophile is the C80. Active-site residues include H186 and E188.

As to quaternary structure, heterodimer of HisH and HisF.

It is found in the cytoplasm. The catalysed reaction is 5-[(5-phospho-1-deoxy-D-ribulos-1-ylimino)methylamino]-1-(5-phospho-beta-D-ribosyl)imidazole-4-carboxamide + L-glutamine = D-erythro-1-(imidazol-4-yl)glycerol 3-phosphate + 5-amino-1-(5-phospho-beta-D-ribosyl)imidazole-4-carboxamide + L-glutamate + H(+). It catalyses the reaction L-glutamine + H2O = L-glutamate + NH4(+). Its pathway is amino-acid biosynthesis; L-histidine biosynthesis; L-histidine from 5-phospho-alpha-D-ribose 1-diphosphate: step 5/9. Functionally, IGPS catalyzes the conversion of PRFAR and glutamine to IGP, AICAR and glutamate. The HisH subunit catalyzes the hydrolysis of glutamine to glutamate and ammonia as part of the synthesis of IGP and AICAR. The resulting ammonia molecule is channeled to the active site of HisF. The protein is Imidazole glycerol phosphate synthase subunit HisH of Bdellovibrio bacteriovorus (strain ATCC 15356 / DSM 50701 / NCIMB 9529 / HD100).